Consider the following 240-residue polypeptide: Probable xyloglucan-specific endo-beta-1,4-glucanase A (240 aa).

The signal sequence occupies residues 1–15 (MKFLTPLVLSSLASA).

Belongs to the glycosyl hydrolase 12 (cellulase H) family.

Its subcellular location is the secreted. The enzyme catalyses xyloglucan + H2O = xyloglucan oligosaccharides.. In terms of biological role, catalyzes endohydrolysis of 1,4-beta-D-glucosidic linkages in xyloglucan with retention of the beta-configuration of the glycosyl residues. Specific for xyloglucan and does not hydrolyze other cell wall components. The protein is Probable xyloglucan-specific endo-beta-1,4-glucanase A (xgeA) of Aspergillus oryzae (strain ATCC 42149 / RIB 40) (Yellow koji mold).